The sequence spans 460 residues: Allantoinase (460 aa).

The Zn(2+) site is built by His70, His72, Lys157, His193, His250, and Asp323. Lys157 carries the N6-carboxylysine modification.

Belongs to the metallo-dependent hydrolases superfamily. Allantoinase family. As to quaternary structure, homotetramer. The cofactor is Zn(2+). Post-translationally, carboxylation allows a single lysine to coordinate two zinc ions.

It catalyses the reaction (S)-allantoin + H2O = allantoate + H(+). The protein operates within nitrogen metabolism; (S)-allantoin degradation; allantoate from (S)-allantoin: step 1/1. In terms of biological role, catalyzes the conversion of allantoin (5-ureidohydantoin) to allantoic acid by hydrolytic cleavage of the five-member hydantoin ring. Involved in the utilization of purines as secondary nitrogen sources, when primary sources are limiting. This is Allantoinase (DAL1) from Saccharomyces cerevisiae (strain ATCC 204508 / S288c) (Baker's yeast).